Reading from the N-terminus, the 730-residue chain is PWWP domain-containing protein 2A (730 aa).

Over residues 1 to 15 the composition is skewed to low complexity; it reads MAAVAAEAAATAASP. A disordered region spans residues 1-134; that stretch reads MAAVAAEAAA…PPAGGDSAVS (134 aa). The span at 66 to 77 shows a compositional bias: pro residues; the sequence is PLPPPPPPPPPG. Phosphoserine is present on residues Ser82 and Ser99. Over residues 91–108 the composition is skewed to pro residues; sequence PEPAAVPVSPPEQPPAAP. An interaction with HDAC1 and MTA1 region spans residues 128 to 346; the sequence is GGDSAVSHLI…KLKTDHKVDG (219 aa). Lys188 is covalently cross-linked (Glycyl lysine isopeptide (Lys-Gly) (interchain with G-Cter in SUMO2)). Disordered stretches follow at residues 257-276, 311-355, and 409-531; these read YNQS…KRKM, IRKG…SQRR, and KEKA…LGKK. A compositionally biased stretch (basic residues) spans 267–276; sequence RKIKRPKRKM. 2 stretches are compositionally biased toward basic and acidic residues: residues 311–329 and 341–354; these read IRKG…RRND and DHKV…ESQR. Residues 396–547 form an interaction with the H2A.Z/H2AZ1 region; sequence MDHAKAREVL…SVYLTLNQET (152 aa). A compositionally biased stretch (low complexity) spans 488 to 501; it reads SAGEAPSEKPSPSE. Over residues 512 to 527 the composition is skewed to basic and acidic residues; it reads DTSRVRVPGEQEELRM. The region spanning 630 to 690 is the PWWP domain; it reads VGDIVWAKIY…LSQLSPFLEN (61 aa).

As to quaternary structure, component of a MTA1-specific subcomplex of the NuRD complex (M1HR), which is composed of PWWP2A, MTA1/2, HDAC1/2, and RBBP4/7 but does not contain CHD4 and MBD3. Interacts with MTA1; the interaction mediates the association of PWWP2A with the M1HR complex. Interacts with H2A.Z/H2AZ1. Interacts (via PWWP domain) with histone H3 trimethylated at 'Lys-36' (H3K36me3). Does not interact with CHD4 and MBD3.

It is found in the nucleus. In terms of biological role, chromatin-binding protein that acts as an adapter between distinct nucleosome components (H3K36me3 or H2A.Z) and chromatin-modifying complexes, contributing to the regulation of the levels of histone acetylation at actively transcribed genes. Competes with CHD4 and MBD3 for interaction with MTA1 to form a NuRD subcomplex, preventing the formation of full NuRD complex (containing CHD4 and MBD3), leading to recruitment of HDACs to gene promoters resulting in turn in the deacetylation of nearby H3K27 and H2A.Z. Plays a role in facilitating transcriptional elongation and repression of spurious transcription initiation through regulation of histone acetylation. Essential for proper mitosis progression. This Mus musculus (Mouse) protein is PWWP domain-containing protein 2A (Pwwp2a).